We begin with the raw amino-acid sequence, 210 residues long: Cell division protein SepF (210 aa).

2 disordered regions span residues 22–72 (DYYE…FDDA) and 79–98 (RGPR…RGST). 2 stretches are compositionally biased toward basic and acidic residues: residues 37 to 60 (RPRE…REYD) and 79 to 88 (RGPREFDRTP).

It belongs to the SepF family. As to quaternary structure, homodimer. Interacts with FtsZ.

Its subcellular location is the cytoplasm. Its function is as follows. Cell division protein that is part of the divisome complex and is recruited early to the Z-ring. Probably stimulates Z-ring formation, perhaps through the cross-linking of FtsZ protofilaments. Its function overlaps with FtsA. The chain is Cell division protein SepF from Mycolicibacterium vanbaalenii (strain DSM 7251 / JCM 13017 / BCRC 16820 / KCTC 9966 / NRRL B-24157 / PYR-1) (Mycobacterium vanbaalenii).